A 558-amino-acid chain; its full sequence is D-xylose-proton symporter-like 3, chloroplastic (558 aa).

A chloroplast-targeting transit peptide spans 1 to 31; it reads MAFAVSVQSHFAIRALKRDHFKNPSPRTFCS. 12 consecutive transmembrane segments (helical) span residues 98–118, 146–166, 175–195, 197–217, 238–258, 264–284, 359–379, 400–420, 426–446, 449–469, 491–511, and 522–542; these read VILPFIFPALGGLLFGYDIGA, LVVSGSLYGALLGSISVYGVA, LIIAAVLYLLGSLITGCAPDL, ILLVGRLLYGFGIGLAMHGAP, LFIVLGILLGFSVGSFQIDVV, MYGFGTPVALLMGLGMWSLPA, ALTIGGGLVLFQQITGQPSVL, VSVIIGVFKLLMTWVAVAKVD, PLLIGGVSGIALSLFLLSAYY, LGGFPLVAVGALLLYVGCYQI, GISLAVLTNFGSNAIVTFAFS, and LFLLFGGIALVSLLFVILVVP.

It belongs to the major facilitator superfamily. Sugar transporter (TC 2.A.1.1) family.

The protein localises to the plastid. It localises to the chloroplast membrane. The polypeptide is D-xylose-proton symporter-like 3, chloroplastic (Arabidopsis thaliana (Mouse-ear cress)).